A 179-amino-acid chain; its full sequence is Apolipophorin-3b (179 aa).

The N-terminal stretch at 1-16 is a signal peptide; it reads MNTLLAVLMLAVAAQA. 12 consecutive repeats follow at residues 30-40, 41-52, 53-60, 61-78, 79-89, 90-99, 100-113, 114-127, 128-140, 141-151, 152-165, and 166-179; these read VQQLNHTIVNA, AHELHETLGLPT, PDEALNLL, TEQANAFKTKIAEVTTSL, KQEAEKHQGSV, AEQLNRFARN, LNNSIHDAATSAQP, ADQLNSLQSALTNV, GHQWQTSQPRPSV, AQEAWAPVQSA, LQEAAEKTKEAAAN, and LQNSIQSAVQKPAN. A glycan (N-linked (GlcNAc...) asparagine) is linked at N34. N101 is a glycosylation site (N-linked (GlcNAc...) asparagine). The segment at 152–179 is disordered; that stretch reads LQEAAEKTKEAAANLQNSIQSAVQKPAN. Polar residues predominate over residues 165-179; it reads NLQNSIQSAVQKPAN.

It belongs to the insect apolipophorin-3 family. Equilibrium between a soluble monomer and a bound lipoprotein form. Apolipophorin-3 associates with lipophorin during lipid loading until each particle contains 14 molecules of apolipophorin-3 in L.migratoria (5 molecules of apolipophorin-3a and 9 of apolipophorin-3b). As to expression, hemolymph.

It localises to the secreted. Functionally, assists in the loading of diacylglycerol, generated from triacylglycerol stores in the fat body through the action of adipokinetic hormone, into lipophorin, the hemolymph lipoprotein. It increases the lipid carrying capacity of lipophorin by covering the expanding hydrophobic surface resulting from diacylglycerol uptake. It thus plays a critical role in the transport of lipids during flight in several species of insects. This is Apolipophorin-3b from Locusta migratoria (Migratory locust).